The sequence spans 225 residues: MARMKARSAKGKRVAKDTWKSKVWYDIYTPQSFGGDVIGQTPANDPANLIGRISEISLRDLTNEHSKHMTRMYFKVDGVSGNNATSQFVGHDTTREYLKSQVRRRRSKINAIVEVRTKDGFKVRVKALVLTAVRARDHHKTEIRVRMEQIIKEMAKETPFAEFVHAMLMGGLGSKIYGDCKKMFPLKRVEIFKSEVIEFGKAAEAPVEEAAAEEVVEEAAAETQE.

This sequence belongs to the eukaryotic ribosomal protein eS1 family.

The sequence is that of Small ribosomal subunit protein eS1 from Methanococcus maripaludis (strain DSM 14266 / JCM 13030 / NBRC 101832 / S2 / LL).